Here is a 288-residue protein sequence, read N- to C-terminus: 2-hydroxy-6-oxononadienedioate/2-hydroxy-6-oxononatrienedioate hydrolase (288 aa).

The AB hydrolase-1 domain occupies 38–274; that stretch reads ALVLLHGSGP…RCGHWAQWEH (237 aa). The active-site Proton acceptor is H268.

The protein belongs to the AB hydrolase superfamily. MhpC family. As to quaternary structure, homodimer.

The enzyme catalyses (2Z,4E)-2-hydroxy-6-oxonona-2,4-dienedioate + H2O = (2Z)-2-hydroxypenta-2,4-dienoate + succinate + H(+). It catalyses the reaction (2Z,4E,7E)-2-hydroxy-6-oxonona-2,4,7-trienedioate + H2O = (2Z)-2-hydroxypenta-2,4-dienoate + fumarate + H(+). It functions in the pathway aromatic compound metabolism; 3-phenylpropanoate degradation. Its function is as follows. Catalyzes the cleavage of the C5-C6 bond of 2-hydroxy-6-oxononadienedioate and 2-hydroxy-6-oxononatrienedioate, a dienol ring fission product of the bacterial meta-cleavage pathway for degradation of phenylpropionic acid. The protein is 2-hydroxy-6-oxononadienedioate/2-hydroxy-6-oxononatrienedioate hydrolase of Burkholderia vietnamiensis (strain G4 / LMG 22486) (Burkholderia cepacia (strain R1808)).